Here is a 618-residue protein sequence, read N- to C-terminus: Leucine aminopeptidase 2 (618 aa).

A peptide contacts are provided by residues 139–141 (QCQ) and 271–276 (PYGGME). Histidine 300 provides a ligand contact to Zn(2+). Catalysis depends on glutamate 301, which acts as the Proton acceptor. Zn(2+) contacts are provided by histidine 304 and glutamate 323. The Proton donor role is filled by tyrosine 389.

It belongs to the peptidase M1 family. The cofactor is Zn(2+).

The protein resides in the cytoplasm. It localises to the nucleus. The catalysed reaction is an epoxide + H2O = an ethanediol. Aminopeptidase that preferentially cleaves di- and tripeptides. Also has low epoxide hydrolase activity (in vitro). Can hydrolyze the epoxide leukotriene LTA(4) but it forms preferentially 5,6-dihydroxy-7,9,11,14-eicosatetraenoic acid rather than the cytokine leukotriene B(4) as the product compared to the homologous mammalian enzyme (in vitro). The chain is Leucine aminopeptidase 2 from Aspergillus clavatus (strain ATCC 1007 / CBS 513.65 / DSM 816 / NCTC 3887 / NRRL 1 / QM 1276 / 107).